Reading from the N-terminus, the 568-residue chain is Protein OCTOPUS-like (568 aa).

7 disordered regions span residues 1-27, 78-99, 168-203, 242-276, 360-428, 446-512, and 526-558; these read MNLS…RLST, LFKP…RPGF, EEAE…ELKP, QKQK…PRFS, PGGS…DKKS, DDEE…SKDG, and RSWK…SHGH. Positions 82–93 are enriched in low complexity; sequence SSSGTNNSNGNG. Residues 168–179 show a composition bias toward acidic residues; it reads EEAEIEEDEENG. Residues 180-193 are compositionally biased toward basic and acidic residues; the sequence is EKDPGEIVEEKSSE. At Ser260 the chain carries Phosphoserine. Residues 400 to 423 show a composition bias toward polar residues; the sequence is SVSNSTTTIDSNSMETAENKGNQN. A compositionally biased stretch (gly residues) spans 532 to 546; the sequence is GGSGGGGGGGGGGGW.

The protein belongs to the OCTOPUS family. In terms of processing, phosphorylation at Ser-260 amplifies the promotion of protophloem differentiation.

Its subcellular location is the cell membrane. The protein resides in the cytoplasm. In terms of biological role, potentiates primary root protophloem differentiation. Regulates roots architecture. This is Protein OCTOPUS-like from Arabidopsis thaliana (Mouse-ear cress).